A 481-amino-acid polypeptide reads, in one-letter code: Alpha-L-arabinofuranosidase 43 (481 aa).

The N-terminal stretch at 1–19 (MRFSVFTAAIAAAFSACCA) is a signal peptide. N-linked (GlcNAc...) asparagine glycans are attached at residues N158, N176, and N365.

This sequence belongs to the glycosyl hydrolase 43 family.

The protein localises to the secreted. It carries out the reaction Hydrolysis of terminal non-reducing alpha-L-arabinofuranoside residues in alpha-L-arabinosides.. With respect to regulation, activity is significantly inhibited by SDS and partially inhibited by Ag(+), Fe(3+) and beta-mercaptoethanol. Functionally, alpha-L-arabinofuranosidase specific for the cleavage of alpha-1,3-linkage. Shows high activity against 4-nitrophenyl alpha-L-arabinofuranoside, debranched arabinan, and sugar beet arabinan. The protein is Alpha-L-arabinofuranosidase 43 of Humicola insolens (Soft-rot fungus).